A 361-amino-acid chain; its full sequence is Phosphoserine aminotransferase (361 aa).

R42 is an L-glutamate binding site. Pyridoxal 5'-phosphate-binding positions include 76 to 77 (AR), W102, T153, D173, and Q196. K197 carries the post-translational modification N6-(pyridoxal phosphate)lysine. Residue 238-239 (NT) participates in pyridoxal 5'-phosphate binding.

Belongs to the class-V pyridoxal-phosphate-dependent aminotransferase family. SerC subfamily. As to quaternary structure, homodimer. The cofactor is pyridoxal 5'-phosphate.

It localises to the cytoplasm. It carries out the reaction O-phospho-L-serine + 2-oxoglutarate = 3-phosphooxypyruvate + L-glutamate. The catalysed reaction is 4-(phosphooxy)-L-threonine + 2-oxoglutarate = (R)-3-hydroxy-2-oxo-4-phosphooxybutanoate + L-glutamate. The protein operates within amino-acid biosynthesis; L-serine biosynthesis; L-serine from 3-phospho-D-glycerate: step 2/3. It functions in the pathway cofactor biosynthesis; pyridoxine 5'-phosphate biosynthesis; pyridoxine 5'-phosphate from D-erythrose 4-phosphate: step 3/5. Its function is as follows. Catalyzes the reversible conversion of 3-phosphohydroxypyruvate to phosphoserine and of 3-hydroxy-2-oxo-4-phosphonooxybutanoate to phosphohydroxythreonine. The sequence is that of Phosphoserine aminotransferase from Yersinia pestis bv. Antiqua (strain Angola).